Consider the following 58-residue polypeptide: uncharacterized protein (58 aa).

A helical transmembrane segment spans residues 5 to 27; that stretch reads FLHANITIIPHSVLYVSLSYYII.

Its subcellular location is the membrane. This is an uncharacterized protein from Saccharomyces cerevisiae (strain ATCC 204508 / S288c) (Baker's yeast).